Reading from the N-terminus, the 225-residue chain is uncharacterized protein (225 aa).

A helical membrane pass occupies residues 181 to 203 (INIFVVFMFIIYLLFYIISSTVF).

The protein resides in the cell membrane. This is an uncharacterized protein from Bacillus anthracis.